Reading from the N-terminus, the 692-residue chain is Pentatricopeptide repeat-containing protein At2g04860 (692 aa).

PPR repeat units follow at residues 12-46 (DLSY…SLTP), 47-83 (NHFT…GLDR), 84-114 (FVYV…MPER), 115-149 (DTVV…GFSP), 150-184 (SATT…GLEL), 185-215 (DSQV…MKDK), 216-250 (STVS…NVEI), 280-314 (DISV…SIVG), 316-345 (TSIV…CMKI), 346-380 (DAVA…GLCT), 381-411 (KTLV…LQET), 412-447 (PLIS…GLLP), 448-482 (DAIT…NFEN), 483-513 (ENFV…IKAP), 514-548 (CTAT…GLKP), 549-584 (DEIT…GISP), and 585-615 (TLQH…MDIK). Residues 620–692 (VWGALLSACI…YDGYLGVSQI (73 aa)) are type E motif; degenerate.

This sequence belongs to the PPR family. PCMP-E subfamily.

This is Pentatricopeptide repeat-containing protein At2g04860 (PCMP-E74) from Arabidopsis thaliana (Mouse-ear cress).